The chain runs to 161 residues: Ribonuclease P protein component (161 aa).

This sequence belongs to the RnpA family. In terms of assembly, consists of a catalytic RNA component (M1 or rnpB) and a protein subunit.

The enzyme catalyses Endonucleolytic cleavage of RNA, removing 5'-extranucleotides from tRNA precursor.. In terms of biological role, RNaseP catalyzes the removal of the 5'-leader sequence from pre-tRNA to produce the mature 5'-terminus. It can also cleave other RNA substrates such as 4.5S RNA. The protein component plays an auxiliary but essential role in vivo by binding to the 5'-leader sequence and broadening the substrate specificity of the ribozyme. This Helicobacter pylori (strain Shi470) protein is Ribonuclease P protein component.